An 837-amino-acid chain; its full sequence is Ubiquitin carboxyl-terminal hydrolase A (837 aa).

The UBP-type; degenerate zinc finger occupies 166-277; sequence PSAFAESIIQ…QHLTHWGLNP (112 aa). Residues 319–835 form the USP domain; that stretch reads TGIENLGNSC…LGYIYFYKRQ (517 aa). C328 (nucleophile) is an active-site residue. In terms of domain architecture, UBA 1 spans 628–669; it reads SFNQEVLDTLLSMDFPLVRCKKALLATGGKDAELAMNWIFEH. The tract at residues 676–695 is disordered; that stretch reads DIEQTPVNNNNNNNNSSNSN. Positions 683-695 are enriched in low complexity; it reads NNNNNNNNSSNSN. The UBA 2 domain maps to 700 to 740; the sequence is VFNSQDVDNIIGMGFTDSQAKLALKNTKGNLERAADWLFSH. The active-site Proton acceptor is H797.

It belongs to the peptidase C19 family.

The enzyme catalyses Thiol-dependent hydrolysis of ester, thioester, amide, peptide and isopeptide bonds formed by the C-terminal Gly of ubiquitin (a 76-residue protein attached to proteins as an intracellular targeting signal).. Functionally, required for development but not growth. The protein is Ubiquitin carboxyl-terminal hydrolase A (ubpA) of Dictyostelium discoideum (Social amoeba).